Reading from the N-terminus, the 353-residue chain is DNA integrity scanning protein DisA (353 aa).

The region spanning 6-144 (DKELMNILKI…GGIKYVLRDS (139 aa)) is the DAC domain. ATP is bound by residues glycine 73, leucine 91, and 104–108 (TRHRT).

This sequence belongs to the DisA family. As to quaternary structure, homooctamer. The cofactor is Mg(2+).

The catalysed reaction is 2 ATP = 3',3'-c-di-AMP + 2 diphosphate. Its function is as follows. Participates in a DNA-damage check-point that is active prior to asymmetric division when DNA is damaged. DisA forms globular foci that rapidly scan along the chromosomes during sporulation, searching for lesions. When a lesion is present, DisA pauses at the lesion site. This triggers a cellular response that culminates in a temporary block in sporulation initiation. In terms of biological role, also has diadenylate cyclase activity, catalyzing the condensation of 2 ATP molecules into cyclic di-AMP (c-di-AMP). c-di-AMP acts as a signaling molecule that couples DNA integrity with progression of sporulation. The rise in c-di-AMP level generated by DisA while scanning the chromosome, operates as a positive signal that advances sporulation; upon encountering a lesion, the DisA focus arrests at the damaged site and halts c-di-AMP synthesis. The protein is DNA integrity scanning protein DisA of Clostridium botulinum (strain 657 / Type Ba4).